A 713-amino-acid polypeptide reads, in one-letter code: Polyribonucleotide nucleotidyltransferase (713 aa).

Residues aspartate 493 and aspartate 499 each coordinate Mg(2+). Residues 560–619 (PRMITIKINPEKIRDVIGKGGSVIRALTEETGTTIDISDDGVVTIASTNSEGMAEAKKRI) form the KH domain. In terms of domain architecture, S1 motif spans 629–697 (GHVYEGTVLK…EKGRVRLSAK (69 aa)).

The protein belongs to the polyribonucleotide nucleotidyltransferase family. Mg(2+) is required as a cofactor.

It is found in the cytoplasm. The enzyme catalyses RNA(n+1) + phosphate = RNA(n) + a ribonucleoside 5'-diphosphate. Its function is as follows. Involved in mRNA degradation. Catalyzes the phosphorolysis of single-stranded polyribonucleotides processively in the 3'- to 5'-direction. This is Polyribonucleotide nucleotidyltransferase from Burkholderia pseudomallei (strain 1106a).